The primary structure comprises 506 residues: Chromosomal replication initiator protein DnaA (506 aa).

The interval 1–77 (MECATTATTP…IWAEESGAKR (77 aa)) is domain I, interacts with DnaA modulators. Residues 77-162 (RRVDLAVRNA…AVAGDVASGS (86 aa)) are domain II. 2 stretches are compositionally biased toward basic and acidic residues: residues 103-112 (TERTDMHSGD) and 121-142 (SDGR…RAVE). The segment at 103-142 (TERTDMHSGDTRQQSARISDGRSTDARGADGRGSDARAVE) is disordered. The segment at 163–384 (PLDARLTFET…GALNKLLAFN (222 aa)) is domain III, AAA+ region. Residues Gly-210, Gly-212, Lys-213, and Thr-214 each coordinate ATP. Residues 385–506 (QLTGEPVTLE…EVLKRLALEA (122 aa)) form a domain IV, binds dsDNA region.

The protein belongs to the DnaA family. Oligomerizes as a right-handed, spiral filament on DNA at oriC.

It localises to the cytoplasm. Plays an essential role in the initiation and regulation of chromosomal replication. ATP-DnaA binds to the origin of replication (oriC) to initiate formation of the DNA replication initiation complex once per cell cycle. Binds the DnaA box (a 9 base pair repeat at the origin) and separates the double-stranded (ds)DNA. Forms a right-handed helical filament on oriC DNA; dsDNA binds to the exterior of the filament while single-stranded (ss)DNA is stabiized in the filament's interior. The ATP-DnaA-oriC complex binds and stabilizes one strand of the AT-rich DNA unwinding element (DUE), permitting loading of DNA polymerase. After initiation quickly degrades to an ADP-DnaA complex that is not apt for DNA replication. Binds acidic phospholipids. The sequence is that of Chromosomal replication initiator protein DnaA from Xanthobacter autotrophicus (strain ATCC BAA-1158 / Py2).